The primary structure comprises 213 residues: Thiamine-phosphate synthase (213 aa).

Residues 40–44 and asparagine 75 contribute to the 4-amino-2-methyl-5-(diphosphooxymethyl)pyrimidine site; that span reads QFREK. Mg(2+) is bound by residues aspartate 76 and aspartate 95. Serine 113 contributes to the 4-amino-2-methyl-5-(diphosphooxymethyl)pyrimidine binding site. 139–141 contacts 2-[(2R,5Z)-2-carboxy-4-methylthiazol-5(2H)-ylidene]ethyl phosphate; that stretch reads TPS. Lysine 142 serves as a coordination point for 4-amino-2-methyl-5-(diphosphooxymethyl)pyrimidine. 2-[(2R,5Z)-2-carboxy-4-methylthiazol-5(2H)-ylidene]ethyl phosphate is bound by residues glycine 171 and 191 to 192; that span reads IS.

It belongs to the thiamine-phosphate synthase family. It depends on Mg(2+) as a cofactor.

It catalyses the reaction 2-[(2R,5Z)-2-carboxy-4-methylthiazol-5(2H)-ylidene]ethyl phosphate + 4-amino-2-methyl-5-(diphosphooxymethyl)pyrimidine + 2 H(+) = thiamine phosphate + CO2 + diphosphate. The enzyme catalyses 2-(2-carboxy-4-methylthiazol-5-yl)ethyl phosphate + 4-amino-2-methyl-5-(diphosphooxymethyl)pyrimidine + 2 H(+) = thiamine phosphate + CO2 + diphosphate. The catalysed reaction is 4-methyl-5-(2-phosphooxyethyl)-thiazole + 4-amino-2-methyl-5-(diphosphooxymethyl)pyrimidine + H(+) = thiamine phosphate + diphosphate. The protein operates within cofactor biosynthesis; thiamine diphosphate biosynthesis; thiamine phosphate from 4-amino-2-methyl-5-diphosphomethylpyrimidine and 4-methyl-5-(2-phosphoethyl)-thiazole: step 1/1. Functionally, condenses 4-methyl-5-(beta-hydroxyethyl)thiazole monophosphate (THZ-P) and 2-methyl-4-amino-5-hydroxymethyl pyrimidine pyrophosphate (HMP-PP) to form thiamine monophosphate (TMP). This chain is Thiamine-phosphate synthase, found in Staphylococcus aureus (strain JH1).